Here is a 233-residue protein sequence, read N- to C-terminus: Small ribosomal subunit protein uS3 (233 aa).

Residues 28–96 (EFADNLDSDF…LRKVVADIAG (69 aa)) form the KH type-2 domain.

The protein belongs to the universal ribosomal protein uS3 family. As to quaternary structure, part of the 30S ribosomal subunit. Forms a tight complex with proteins S10 and S14.

Its function is as follows. Binds the lower part of the 30S subunit head. Binds mRNA in the 70S ribosome, positioning it for translation. The protein is Small ribosomal subunit protein uS3 of Shigella flexneri.